A 187-amino-acid polypeptide reads, in one-letter code: ATP synthase subunit b, chloroplastic (187 aa).

Residues 34–56 traverse the membrane as a helical segment; it reads LINLAAVIGLLFYSGRSFLTNLL.

Belongs to the ATPase B chain family. As to quaternary structure, F-type ATPases have 2 components, F(1) - the catalytic core - and F(0) - the membrane proton channel. F(1) has five subunits: alpha(3), beta(3), gamma(1), delta(1), epsilon(1). F(0) has four main subunits: a(1), b(1), b'(1) and c(10-14). The alpha and beta chains form an alternating ring which encloses part of the gamma chain. F(1) is attached to F(0) by a central stalk formed by the gamma and epsilon chains, while a peripheral stalk is formed by the delta, b and b' chains.

It localises to the plastid. The protein resides in the chloroplast thylakoid membrane. F(1)F(0) ATP synthase produces ATP from ADP in the presence of a proton or sodium gradient. F-type ATPases consist of two structural domains, F(1) containing the extramembraneous catalytic core and F(0) containing the membrane proton channel, linked together by a central stalk and a peripheral stalk. During catalysis, ATP synthesis in the catalytic domain of F(1) is coupled via a rotary mechanism of the central stalk subunits to proton translocation. Its function is as follows. Component of the F(0) channel, it forms part of the peripheral stalk, linking F(1) to F(0). The sequence is that of ATP synthase subunit b, chloroplastic from Chlorokybus atmophyticus (Soil alga).